The following is a 444-amino-acid chain: MAASTPIIQSVRAIPVAGHDSMLLNLSGAHAPYFTRNLLVIEDNSGNIGVGEIPGGEKILATLNDAKSLILGQPIGEYKNLLKKIHQTFADRDSGGRGNQTFDLRTTVHVVTAYESALLDLLGKHLNVNVASLLGDGQQRDEVEVLGYLFFIGDRKQTSLDYATSTHLNHDWYQVRHEKALTPEAIQRLAEASYDRYGFKDFKLKGGVLHGEQEAEAVTAIARRFPDARVTLDPNGAWYLDEAIGLGKHLKGVLAYAEDPCGAEQGYSSREIMAEFKRATGLPTATNMIATDWREMSHSIQLQAVDIPLADPHFWTLEGSVRVSQLCNMYNLTWGSHSNNHFDVSLAMFTHVAAAAVGNVTAIDTHWIWQEGTDHLTKQPLEIKGGKIQVPSVPGLGVELDWDNINRAHELYKAKGLGARNDADAMQFMVPNWKFDHKKPCLVR.

Substrate-binding residues include His30, Thr101, Tyr148, and Lys203. Lys205 functions as the Proton acceptor in the catalytic mechanism. Mg(2+) is bound by residues Asp233, Glu264, and Asn287. Residue 233–235 participates in substrate binding; it reads DPN. Substrate is bound by residues Asn287, 337–339, His366, and Arg420; that span reads HSN. Catalysis depends on His337, which acts as the Proton acceptor.

It belongs to the mandelate racemase/muconate lactonizing enzyme family. GlucD subfamily. Mg(2+) serves as cofactor.

The catalysed reaction is D-glucarate = 5-dehydro-4-deoxy-D-glucarate + H2O. Its pathway is carbohydrate acid metabolism; D-glucarate degradation; 2,5-dioxopentanoate from D-glucarate: step 1/2. Its function is as follows. Catalyzes the dehydration of glucarate to 5-keto-4-deoxy-D-glucarate (5-kdGluc). The chain is Glucarate dehydratase (gudD) from Acinetobacter baylyi (strain ATCC 33305 / BD413 / ADP1).